We begin with the raw amino-acid sequence, 300 residues long: Acetylglutamate kinase (300 aa).

Substrate contacts are provided by residues 69–70 (GG), arginine 91, and asparagine 197.

The protein belongs to the acetylglutamate kinase family. ArgB subfamily.

It localises to the cytoplasm. It catalyses the reaction N-acetyl-L-glutamate + ATP = N-acetyl-L-glutamyl 5-phosphate + ADP. It participates in amino-acid biosynthesis; L-arginine biosynthesis; N(2)-acetyl-L-ornithine from L-glutamate: step 2/4. In terms of biological role, catalyzes the ATP-dependent phosphorylation of N-acetyl-L-glutamate. In Kineococcus radiotolerans (strain ATCC BAA-149 / DSM 14245 / SRS30216), this protein is Acetylglutamate kinase.